Consider the following 165-residue polypeptide: Crossover junction endodeoxyribonuclease RuvC (165 aa).

Residues Asp-8, Glu-69, and His-141 contribute to the active site. The Mg(2+) site is built by Asp-8, Glu-69, and His-141.

This sequence belongs to the RuvC family. As to quaternary structure, homodimer which binds Holliday junction (HJ) DNA. The HJ becomes 2-fold symmetrical on binding to RuvC with unstacked arms; it has a different conformation from HJ DNA in complex with RuvA. In the full resolvosome a probable DNA-RuvA(4)-RuvB(12)-RuvC(2) complex forms which resolves the HJ. Requires Mg(2+) as cofactor.

The protein resides in the cytoplasm. It carries out the reaction Endonucleolytic cleavage at a junction such as a reciprocal single-stranded crossover between two homologous DNA duplexes (Holliday junction).. The RuvA-RuvB-RuvC complex processes Holliday junction (HJ) DNA during genetic recombination and DNA repair. Endonuclease that resolves HJ intermediates. Cleaves cruciform DNA by making single-stranded nicks across the HJ at symmetrical positions within the homologous arms, yielding a 5'-phosphate and a 3'-hydroxyl group; requires a central core of homology in the junction. The consensus cleavage sequence is 5'-(A/T)TT(C/G)-3'. Cleavage occurs on the 3'-side of the TT dinucleotide at the point of strand exchange. HJ branch migration catalyzed by RuvA-RuvB allows RuvC to scan DNA until it finds its consensus sequence, where it cleaves and resolves the cruciform DNA. The polypeptide is Crossover junction endodeoxyribonuclease RuvC (Wolbachia pipientis subsp. Culex pipiens (strain wPip)).